A 378-amino-acid chain; its full sequence is Cytochrome b (378 aa).

The next 4 membrane-spanning stretches (helical) occupy residues 34-54 (FGSL…FLAM), 78-99 (WFLR…FMHV), 114-134 (WNTG…GYVL), and 179-199 (FFTF…IHLL). Residues His84 and His98 each contribute to the heme b site. Heme b is bound by residues His183 and His197. An a ubiquinone-binding site is contributed by His202. A run of 4 helical transmembrane segments spans residues 227 to 247 (YKDI…IWKF), 289 to 309 (LGGV…PFTH), 321 to 341 (LNQI…WIGA), and 348 to 368 (YVLT…INPL).

Belongs to the cytochrome b family. The main subunits of complex b-c1 are: cytochrome b, cytochrome c1 and the Rieske protein. Requires heme b as cofactor.

The protein localises to the mitochondrion inner membrane. In terms of biological role, component of the ubiquinol-cytochrome c reductase complex (complex III or cytochrome b-c1 complex) that is part of the mitochondrial respiratory chain. The b-c1 complex mediates electron transfer from ubiquinol to cytochrome c. Contributes to the generation of a proton gradient across the mitochondrial membrane that is then used for ATP synthesis. This Anopheles quadrimaculatus (Common malaria mosquito) protein is Cytochrome b (MT-CYB).